We begin with the raw amino-acid sequence, 360 residues long: Peptide chain release factor 1 (360 aa).

Gln235 bears the N5-methylglutamine mark. The disordered stretch occupies residues 286-313 (RQQAEASTRRNLLGSGDRSDRNRTYNFP).

The protein belongs to the prokaryotic/mitochondrial release factor family. Methylated by PrmC. Methylation increases the termination efficiency of RF1.

The protein localises to the cytoplasm. Its function is as follows. Peptide chain release factor 1 directs the termination of translation in response to the peptide chain termination codons UAG and UAA. This Cronobacter sakazakii (strain ATCC BAA-894) (Enterobacter sakazakii) protein is Peptide chain release factor 1.